A 358-amino-acid polypeptide reads, in one-letter code: tRNA N6-adenosine threonylcarbamoyltransferase (358 aa).

Residues His-111 and His-115 each coordinate Fe cation. Residues 146–150 (LVSGG), Asp-179, Gly-192, and Asn-294 each bind substrate. Residue Asp-322 participates in Fe cation binding.

The protein belongs to the KAE1 / TsaD family. Fe(2+) serves as cofactor.

It is found in the cytoplasm. It catalyses the reaction L-threonylcarbamoyladenylate + adenosine(37) in tRNA = N(6)-L-threonylcarbamoyladenosine(37) in tRNA + AMP + H(+). Its function is as follows. Required for the formation of a threonylcarbamoyl group on adenosine at position 37 (t(6)A37) in tRNAs that read codons beginning with adenine. Is involved in the transfer of the threonylcarbamoyl moiety of threonylcarbamoyl-AMP (TC-AMP) to the N6 group of A37, together with TsaE and TsaB. TsaD likely plays a direct catalytic role in this reaction. The polypeptide is tRNA N6-adenosine threonylcarbamoyltransferase (Helicobacter hepaticus (strain ATCC 51449 / 3B1)).